We begin with the raw amino-acid sequence, 2108 residues long: General negative regulator of transcription subunit 1 (2108 aa).

2 coiled-coil regions span residues 795 to 813 (NVTL…KSLT) and 1021 to 1046 (MQQH…QQQQ). Positions 1323–1352 (QQQQLQKSRLNQPSQSAQPPGVNVPNPQGG) are disordered. Residues 1329–1339 (KSRLNQPSQSA) are compositionally biased toward polar residues. The span at 1340–1352 (QPPGVNVPNPQGG) shows a compositional bias: low complexity. The residue at position 2102 (Thr-2102) is a Phosphothreonine.

This sequence belongs to the CNOT1 family. In terms of assembly, forms a NOT protein complex that comprises NOT1, NOT2, NOT3, NOT4 and NOT5. Subunit of the 1.0 MDa CCR4-NOT core complex that contains CCR4, CAF1, NOT1, NOT2, NOT3, NOT4, NOT5, CAF40 and CAF130. In the complex interacts with CCR4, POP2, NOT2, NOT4 and NOT5. The core complex probably is part of a less characterized 1.9 MDa CCR4-NOT complex.

Its subcellular location is the cytoplasm. The protein localises to the nucleus. Functionally, acts as a component of the CCR4-NOT core complex, which in the nucleus seems to be a general transcription factor, and in the cytoplasm the major mRNA deadenylase involved in mRNA turnover. The NOT protein subcomplex negatively regulates the basal and activated transcription of many genes. Preferentially affects TC-type TATA element-dependent transcription. Could directly or indirectly inhibit component(s) of the general transcription machinery. This is General negative regulator of transcription subunit 1 (CDC39) from Saccharomyces cerevisiae (strain ATCC 204508 / S288c) (Baker's yeast).